The following is a 478-amino-acid chain: Serine carboxypeptidase-like 33 (478 aa).

Positions M1–A33 are cleaved as a signal peptide. Disulfide bonds link C95–C361, C257–C268, and C292–C330. N114 and N146 each carry an N-linked (GlcNAc...) asparagine glycan. The active site involves S188. N263, N295, and N362 each carry an N-linked (GlcNAc...) asparagine glycan. Catalysis depends on residues D398 and H451.

It belongs to the peptidase S10 family. In terms of tissue distribution, expressed in senescent leaves and flowers.

Its subcellular location is the secreted. Its function is as follows. Probable carboxypeptidase. The protein is Serine carboxypeptidase-like 33 (SCPL33) of Arabidopsis thaliana (Mouse-ear cress).